Consider the following 277-residue polypeptide: Putative acetylornithine deacetylase (277 aa).

The enzyme catalyses N(2)-acetyl-L-ornithine + H2O = L-ornithine + acetate. It functions in the pathway amino-acid biosynthesis; L-arginine biosynthesis; L-ornithine from N(2)-acetyl-L-ornithine (linear): step 1/1. In Leptospira biflexa, this protein is Putative acetylornithine deacetylase (argE).